The sequence spans 307 residues: ATP synthase gamma chain (307 aa).

Belongs to the ATPase gamma chain family. As to quaternary structure, F-type ATPases have 2 components, CF(1) - the catalytic core - and CF(0) - the membrane proton channel. CF(1) has five subunits: alpha(3), beta(3), gamma(1), delta(1), epsilon(1). CF(0) has three main subunits: a, b and c.

The protein resides in the cell membrane. Produces ATP from ADP in the presence of a proton gradient across the membrane. The gamma chain is believed to be important in regulating ATPase activity and the flow of protons through the CF(0) complex. The chain is ATP synthase gamma chain from Mycolicibacterium smegmatis (strain ATCC 700084 / mc(2)155) (Mycobacterium smegmatis).